A 151-amino-acid chain; its full sequence is NADPH-dependent 7-cyano-7-deazaguanine reductase (151 aa).

The active-site Thioimide intermediate is C51. D58 (proton donor) is an active-site residue. Substrate is bound by residues 73–75 and 92–93; these read VES and HE.

The protein belongs to the GTP cyclohydrolase I family. QueF type 1 subfamily.

The protein resides in the cytoplasm. It carries out the reaction 7-aminomethyl-7-carbaguanine + 2 NADP(+) = 7-cyano-7-deazaguanine + 2 NADPH + 3 H(+). The protein operates within tRNA modification; tRNA-queuosine biosynthesis. Functionally, catalyzes the NADPH-dependent reduction of 7-cyano-7-deazaguanine (preQ0) to 7-aminomethyl-7-deazaguanine (preQ1). The chain is NADPH-dependent 7-cyano-7-deazaguanine reductase from Bacteroides fragilis (strain ATCC 25285 / DSM 2151 / CCUG 4856 / JCM 11019 / LMG 10263 / NCTC 9343 / Onslow / VPI 2553 / EN-2).